Consider the following 122-residue polypeptide: Large ribosomal subunit protein bL17 (122 aa).

Belongs to the bacterial ribosomal protein bL17 family. In terms of assembly, part of the 50S ribosomal subunit. Contacts protein L32.

The protein is Large ribosomal subunit protein bL17 of Wigglesworthia glossinidia brevipalpis.